We begin with the raw amino-acid sequence, 625 residues long: Sphingomyelin phosphodiesterase (625 aa).

Residues 1-20 (MPRHGVSPGQGLPRSGREQA) are disordered. The N-terminal stretch at 1–40 (MPRHGVSPGQGLPRSGREQASDRSLGAPCLRLLWLGLALA) is a signal peptide. The 85-residue stretch at 81–165 (WNLTCPTCKG…LLGSSCGHWD (85 aa)) folds into the Saposin B-type domain. The N-linked (GlcNAc...) asparagine glycan is linked to N82. Cystine bridges form between C85/C161, C88/C153, and C116/C127. N171 is a glycosylation site (N-linked (GlcNAc...) asparagine). Zn(2+) is bound by residues D202 and H204. Intrachain disulfides connect C217–C222 and C223–C246. Zn(2+)-binding residues include D274 and N314. N-linked (GlcNAc...) asparagine glycans are attached at residues N331 and N391. An intrachain disulfide couples C381 to C427. 3 residues coordinate Zn(2+): H421, H453, and H455. N-linked (GlcNAc...) asparagine glycosylation is present at N499. S504 carries the post-translational modification Phosphoserine. N516 carries N-linked (GlcNAc...) asparagine glycosylation. 2 disulfides stabilise this stretch: C580–C584 and C590–C603.

The protein belongs to the acid sphingomyelinase family. In terms of assembly, monomer. Interacts with SORT1; the interaction is required for SMPD1 targeting to lysosomes. Zn(2+) serves as cofactor. Post-translationally, proteolytically processed. Mature lysosomal form arises from C-terminal proteolytic processing of pro-sphingomyelin phosphodiesterase. In terms of processing, both lysosomal and secreted forms are glycosylated but they show a differential pattern of glycosylation. Phosphorylated at Ser-504 by PRKCD upon stress stimuli. Phosphorylation is required for secretion. Post-translationally, this form is generated following cleavage by CASP7 in the extracellular milieu. It shows increased activity.

It is found in the lysosome. The protein resides in the lipid droplet. It localises to the secreted. The protein localises to the extracellular space. The catalysed reaction is a sphingomyelin + H2O = phosphocholine + an N-acylsphing-4-enine + H(+). The enzyme catalyses N-(octadecanoyl)-sphing-4-enine-1-phosphocholine + H2O = N-octadecanoylsphing-4-enine + phosphocholine + H(+). It carries out the reaction a 1,2-diacyl-sn-glycero-3-phosphocholine + H2O = phosphocholine + a 1,2-diacyl-sn-glycerol + H(+). It catalyses the reaction 1,2-dihexadecanoyl-sn-glycero-3-phosphocholine + H2O = 1,2-dihexadecanoyl-sn-glycerol + phosphocholine + H(+). Its activity is regulated as follows. Hydrolysis of liposomal sphingomyelin is stimulated by incorporation of diacylglycerol (DAG), ceramide and free fatty acids into the liposomal membranes. Phosphatidylcholine hydrolysis is inhibited by incorporation of cholesterol, ceramide, DAG, monoacylglycerol and fatty acids. Functionally, converts sphingomyelin to ceramide. Exists as two enzymatic forms that arise from alternative trafficking of a single protein precursor, one that is targeted to the endolysosomal compartment, whereas the other is released extracellularly. However, in response to various forms of stress, lysosomal exocytosis may represent a major source of the secretory form. In terms of biological role, in the lysosomes, converts sphingomyelin to ceramide. Plays an important role in the export of cholesterol from the intraendolysosomal membranes. Also has phospholipase C activities toward 1,2-diacylglycerolphosphocholine and 1,2-diacylglycerolphosphoglycerol. Modulates stress-induced apoptosis through the production of ceramide. When secreted, modulates cell signaling with its ability to reorganize the plasma membrane by converting sphingomyelin to ceramide. Secreted form is increased in response to stress and inflammatory mediators such as IL1B, IFNG or TNF as well as upon infection with bacteria and viruses. Produces the release of ceramide in the outer leaflet of the plasma membrane playing a central role in host defense. Ceramide reorganizes these rafts into larger signaling platforms that are required to internalize bacteria, induce apoptosis and regulate the cytokine response in infected cells. In wounded cells, the lysosomal form is released extracellularly in the presence of Ca(2+) and promotes endocytosis and plasma membrane repair. Its function is as follows. This form is generated following cleavage by CASP7 in the extracellular milieu in response to bacterial infection. It shows increased ability to convert sphingomyelin to ceramide and promotes plasma membrane repair. Plasma membrane repair by ceramide counteracts the action of gasdermin-D (GSDMD) perforin (PRF1) pores that are formed in response to bacterial infection. In Bos taurus (Bovine), this protein is Sphingomyelin phosphodiesterase (SMPD1).